A 317-amino-acid polypeptide reads, in one-letter code: Transaldolase (317 aa).

The active-site Schiff-base intermediate with substrate is lysine 132.

Belongs to the transaldolase family. Type 1 subfamily. In terms of assembly, homodimer.

The protein localises to the cytoplasm. The enzyme catalyses D-sedoheptulose 7-phosphate + D-glyceraldehyde 3-phosphate = D-erythrose 4-phosphate + beta-D-fructose 6-phosphate. It participates in carbohydrate degradation; pentose phosphate pathway; D-glyceraldehyde 3-phosphate and beta-D-fructose 6-phosphate from D-ribose 5-phosphate and D-xylulose 5-phosphate (non-oxidative stage): step 2/3. Functionally, transaldolase is important for the balance of metabolites in the pentose-phosphate pathway. This Shewanella denitrificans (strain OS217 / ATCC BAA-1090 / DSM 15013) protein is Transaldolase.